We begin with the raw amino-acid sequence, 204 residues long: Nicotine blue oxidoreductase (204 aa).

Homotetramer. FMN is required as a cofactor.

It carries out the reaction 3,3'-bipyridine-2,2',5,5',6,6'-hexol + NADP(+) = (E)-2,2',5,5'-tetrahydroxy-6H,6'H-(3,3'-bipyridinylidene)-6,6'-dione + NADPH + 3 H(+). The catalysed reaction is 3,3'-bipyridine-2,2',5,5',6,6'-hexol + NAD(+) = (E)-2,2',5,5'-tetrahydroxy-6H,6'H-(3,3'-bipyridinylidene)-6,6'-dione + NADH + 3 H(+). The protein operates within alkaloid degradation; nicotine degradation. In terms of biological role, catalyzes the reduction of nicotine blue to its hydroquinone form. Nicotine blue is the name given to the compound formed by the autocatalytic condensation of two molecules of 2,3,6-trihydroxypyridine, an intermediate in the nicotine degradation pathway. May play a role in preventing the intracellular formation of nicotine blue semiquinone radicals, which by redox cycling would lead to the formation of toxic reactive oxygen species. Besides nicotine blue, several other quinones are reduced by nboR. The chain is Nicotine blue oxidoreductase (nboR) from Paenarthrobacter nicotinovorans (Arthrobacter nicotinovorans).